A 577-amino-acid chain; its full sequence is Arginine--tRNA ligase (577 aa).

Positions 122-132 (PNVAKEMHVGH) match the 'HIGH' region motif.

This sequence belongs to the class-I aminoacyl-tRNA synthetase family. As to quaternary structure, monomer.

The protein resides in the cytoplasm. It catalyses the reaction tRNA(Arg) + L-arginine + ATP = L-arginyl-tRNA(Arg) + AMP + diphosphate. The protein is Arginine--tRNA ligase of Haemophilus influenzae (strain 86-028NP).